The primary structure comprises 231 residues: Transmembrane protein 225 (231 aa).

The Cytoplasmic segment spans residues 1–13 (MMRIPNRSIQAAN). A helical transmembrane segment spans residues 14–34 (IFFSSGAILLLIAGLIMENWV). The Extracellular segment spans residues 35-71 (ELIPKVRKDKVTHSPWLGCCPPFWPEESLEAIRRMMM). Residues 72 to 92 (MSLNISIYLNLIIGLQFTYMI) form a helical membrane-spanning segment. The Cytoplasmic segment spans residues 93 to 99 (SQNKCVH). The helical transmembrane segment at 100–120 (LLIGFLSFFTGCLLFYAIIVY) threads the bilayer. Topologically, residues 121 to 139 (HHKLNKGQYVYFVNYKTKW) are extracellular. The helical transmembrane segment at 140–160 (IVFTIYLTIALFLTCGIFSFI) threads the bilayer. The Cytoplasmic segment spans residues 161–231 (QCTNRCACMK…LQSRRVTWAL (71 aa)). The RVxF motif lies at 225–229 (RRVTW).

Interacts (via RVxF motif) with PPP1CC. In terms of tissue distribution, expressed in testis, specifically in spermatocytes and round spermatids.

It is found in the cytoplasmic vesicle. Its subcellular location is the secretory vesicle. The protein localises to the acrosome membrane. Functionally, probably inhibits protein phosphatase 1 (PP1) in sperm via binding to catalytic subunit PPP1CC. The protein is Transmembrane protein 225 (Tmem225) of Rattus norvegicus (Rat).